The following is a 504-amino-acid chain: Cobyric acid synthase (504 aa).

The GATase cobBQ-type domain occupies 254–442; it reads AIDVAVIRYP…MHDLFHNDMF (189 aa). Cysteine 336 (nucleophile) is an active-site residue. Residue histidine 434 is part of the active site.

Belongs to the CobB/CobQ family. CobQ subfamily.

Its pathway is cofactor biosynthesis; adenosylcobalamin biosynthesis. In terms of biological role, catalyzes amidations at positions B, D, E, and G on adenosylcobyrinic A,C-diamide. NH(2) groups are provided by glutamine, and one molecule of ATP is hydrogenolyzed for each amidation. The polypeptide is Cobyric acid synthase (Anoxybacillus flavithermus (strain DSM 21510 / WK1)).